Here is a 117-residue protein sequence, read N- to C-terminus: Immunoglobulin heavy variable 3-21 (117 aa).

The signal sequence occupies residues 1–19 (MELGLRWVFLVAILEGVQC). The tract at residues 20-44 (EVQLVESGGGLVKPGGSLRLSCAAS) is framework-1. The region spanning 20 to 117 (EVQLVESGGG…EDTAVYYCAR (98 aa)) is the Ig-like domain. An intrachain disulfide couples Cys-41 to Cys-115. The complementarity-determining-1 stretch occupies residues 45 to 52 (GFTFSSYS). The segment at 53–69 (MNWVRQAPGKGLEWVSS) is framework-2. Positions 70–77 (ISSSSSYI) are complementarity-determining-2. Residues 78-115 (YYADSVKGRFTISRDNAKNSLYLQMNSLRAEDTAVYYC) are framework-3. A complementarity-determining-3 region spans residues 116-117 (AR).

Immunoglobulins are composed of two identical heavy chains and two identical light chains; disulfide-linked.

The protein localises to the secreted. The protein resides in the cell membrane. Functionally, v region of the variable domain of immunoglobulin heavy chains that participates in the antigen recognition. Immunoglobulins, also known as antibodies, are membrane-bound or secreted glycoproteins produced by B lymphocytes. In the recognition phase of humoral immunity, the membrane-bound immunoglobulins serve as receptors which, upon binding of a specific antigen, trigger the clonal expansion and differentiation of B lymphocytes into immunoglobulins-secreting plasma cells. Secreted immunoglobulins mediate the effector phase of humoral immunity, which results in the elimination of bound antigens. The antigen binding site is formed by the variable domain of one heavy chain, together with that of its associated light chain. Thus, each immunoglobulin has two antigen binding sites with remarkable affinity for a particular antigen. The variable domains are assembled by a process called V-(D)-J rearrangement and can then be subjected to somatic hypermutations which, after exposure to antigen and selection, allow affinity maturation for a particular antigen. The chain is Immunoglobulin heavy variable 3-21 from Homo sapiens (Human).